An 842-amino-acid chain; its full sequence is Serine/threonine-protein phosphatase 4 regulatory subunit 3 (842 aa).

Regulatory subunit 3 (R3) of the histone H2A phosphatase complex (HTP-C) consisting of PPH3, PSY2 and PSY4.

It is found in the nucleus. Its function is as follows. Core regulatory subunit of the histone H2A phosphatase complex, which dephosphorylates H2AS128ph (gamma-H2A) that has been displaced from sites of DNA lesions in the double-stranded DNA break repair process. Dephosphorylation is necessary for efficient recovery from the DNA damage checkpoint. This Candida glabrata (strain ATCC 2001 / BCRC 20586 / JCM 3761 / NBRC 0622 / NRRL Y-65 / CBS 138) (Yeast) protein is Serine/threonine-protein phosphatase 4 regulatory subunit 3 (PSY2).